Consider the following 131-residue polypeptide: Small ribosomal subunit protein uS11 (131 aa).

The protein belongs to the universal ribosomal protein uS11 family. In terms of assembly, part of the 30S ribosomal subunit. Interacts with proteins S7 and S18. Binds to IF-3.

In terms of biological role, located on the platform of the 30S subunit, it bridges several disparate RNA helices of the 16S rRNA. Forms part of the Shine-Dalgarno cleft in the 70S ribosome. This chain is Small ribosomal subunit protein uS11, found in Trichodesmium erythraeum (strain IMS101).